The primary structure comprises 221 residues: Orotate phosphoribosyltransferase (221 aa).

Residue K27 coordinates 5-phospho-alpha-D-ribose 1-diphosphate. Residue 35–36 coordinates orotate; it reads FF. Residues 75–76, R102, K103, K106, H108, and 128–136 each bind 5-phospho-alpha-D-ribose 1-diphosphate; these read YK and DDVLTAGTA. The orotate site is built by T132 and R160.

Belongs to the purine/pyrimidine phosphoribosyltransferase family. PyrE subfamily. Homodimer. It depends on Mg(2+) as a cofactor.

It carries out the reaction orotidine 5'-phosphate + diphosphate = orotate + 5-phospho-alpha-D-ribose 1-diphosphate. Its pathway is pyrimidine metabolism; UMP biosynthesis via de novo pathway; UMP from orotate: step 1/2. Its function is as follows. Catalyzes the transfer of a ribosyl phosphate group from 5-phosphoribose 1-diphosphate to orotate, leading to the formation of orotidine monophosphate (OMP). The polypeptide is Orotate phosphoribosyltransferase (Dichelobacter nodosus (strain VCS1703A)).